We begin with the raw amino-acid sequence, 206 residues long: Ras-related protein RABG3c (206 aa).

15 to 22 (GDSGVGKT) contacts GTP. The Effector region signature appears at 37–45 (YKATIGADF). GTP is bound by residues 63–67 (DTAGQ), 125–128 (NKTD), and 158–159 (SA). S-geranylgeranyl cysteine attachment occurs at residues Cys-204 and Cys-206. Position 206 is a cysteine methyl ester (Cys-206).

This sequence belongs to the small GTPase superfamily. Rab family.

It is found in the cell membrane. In terms of biological role, intracellular vesicle trafficking and protein transport. In Arabidopsis thaliana (Mouse-ear cress), this protein is Ras-related protein RABG3c (RABG3C).